We begin with the raw amino-acid sequence, 675 residues long: INO80 complex subunit D (675 aa).

5 disordered regions span residues 1–39 (MNNNSNNNNNNNIDQKNETTNEITNNTSNNNNIINNVNQ), 183–203 (TGNNNNNTTTTTTTTTTNSTP), 274–324 (LKQK…ERQV), 473–523 (DSNK…KLNK), and 627–675 (VPVT…TMIS). 3 stretches are compositionally biased toward low complexity: residues 282-318 (QQLQNQKMFEQSQQQDQQQKPVQQPIQQQQQQDQLQI), 482-519 (NNDNNINNNNNNNNNNNNNNNNNNNNNNNNNNNNNNNN), and 634-648 (NQNNQNNNNNNTNNS). The segment covering 664–675 (EILKDSDNTMIS) has biased composition (basic and acidic residues).

The protein belongs to the INO80D family. Component of the chromatin-remodeling INO80 complex.

The protein localises to the nucleus. In terms of biological role, putative regulatory component of the chromatin remodeling INO80 complex which is involved in transcriptional regulation, DNA replication and probably DNA repair. This Dictyostelium discoideum (Social amoeba) protein is INO80 complex subunit D.